The sequence spans 553 residues: Coiled-coil domain-containing protein 22 homolog (553 aa).

Residues 236–264 form a disordered region; it reads DSEEPAPPPISTVKPDASAEEEASPIQEL. Coiled-coil stretches lie at residues 261–286, 314–407, and 498–549; these read IQELSDQVEELRVQCETLLAERKAHA, ERTS…QSLA, and NVTK…VEQP.

This sequence belongs to the CCDC22 family.

This Drosophila erecta (Fruit fly) protein is Coiled-coil domain-containing protein 22 homolog.